Consider the following 177-residue polypeptide: ATP synthase subunit delta (177 aa).

Belongs to the ATPase delta chain family. F-type ATPases have 2 components, F(1) - the catalytic core - and F(0) - the membrane proton channel. F(1) has five subunits: alpha(3), beta(3), gamma(1), delta(1), epsilon(1). F(0) has three main subunits: a(1), b(2) and c(10-14). The alpha and beta chains form an alternating ring which encloses part of the gamma chain. F(1) is attached to F(0) by a central stalk formed by the gamma and epsilon chains, while a peripheral stalk is formed by the delta and b chains.

It is found in the cell inner membrane. Functionally, f(1)F(0) ATP synthase produces ATP from ADP in the presence of a proton or sodium gradient. F-type ATPases consist of two structural domains, F(1) containing the extramembraneous catalytic core and F(0) containing the membrane proton channel, linked together by a central stalk and a peripheral stalk. During catalysis, ATP synthesis in the catalytic domain of F(1) is coupled via a rotary mechanism of the central stalk subunits to proton translocation. In terms of biological role, this protein is part of the stalk that links CF(0) to CF(1). It either transmits conformational changes from CF(0) to CF(1) or is implicated in proton conduction. This is ATP synthase subunit delta from Proteus mirabilis (strain HI4320).